The sequence spans 474 residues: UDP-N-acetylmuramate--L-alanine ligase (474 aa).

108–114 contacts ATP; it reads GTHGKTT.

Belongs to the MurCDEF family.

Its subcellular location is the cytoplasm. It carries out the reaction UDP-N-acetyl-alpha-D-muramate + L-alanine + ATP = UDP-N-acetyl-alpha-D-muramoyl-L-alanine + ADP + phosphate + H(+). Its pathway is cell wall biogenesis; peptidoglycan biosynthesis. Functionally, cell wall formation. The protein is UDP-N-acetylmuramate--L-alanine ligase of Chloroflexus aggregans (strain MD-66 / DSM 9485).